The following is a 345-amino-acid chain: Probable deoxyhypusine synthase 2 (345 aa).

The Nucleophile role is filled by lysine 292.

Belongs to the deoxyhypusine synthase family. The cofactor is NAD(+).

The enzyme catalyses [eIF5A protein]-L-lysine + spermidine = [eIF5A protein]-deoxyhypusine + propane-1,3-diamine. It participates in protein modification; eIF5A hypusination. Catalyzes the NAD-dependent oxidative cleavage of spermidine and the subsequent transfer of the butylamine moiety of spermidine to the epsilon-amino group of a specific lysine residue of the eIF-5A precursor protein to form the intermediate deoxyhypusine residue. This chain is Probable deoxyhypusine synthase 2 (dys2), found in Methanosarcina acetivorans (strain ATCC 35395 / DSM 2834 / JCM 12185 / C2A).